We begin with the raw amino-acid sequence, 396 residues long: General transcription factor IIH subunit 2 (396 aa).

The VWFA domain maps to 60–236 (HLYVVVDGSR…HYKELLARHV (177 aa)). A Phosphotyrosine modification is found at Y95. Residues 292–309 (CPQCRAKYCELPVECKIC) form a C4-type zinc finger.

This sequence belongs to the GTF2H2 family. Component of the TFIID-containing RNA polymerase II pre-initiation complex that is composed of TBP and at least GTF2A1, GTF2A2, GTF2E1, GTF2E2, GTF2F1, GTF2H2, GTF2H3, GTF2H4, GTF2H5, GTF2B, TCEA1, ERCC2 and ERCC3. Component of the 7-subunit TFIIH core complex composed of XPB/ERCC3, XPD/ERCC2, GTF2H1, GTF2H2, GTF2H3, GTF2H4 and GTF2H5, which is active in NER. The core complex associates with the 3-subunit CDK-activating kinase (CAK) module composed of CCNH/cyclin H, CDK7 and MNAT1 to form the 10-subunit holoenzyme (holo-TFIIH) active in transcription. Interacts with XPB, XPD, GTF2H1 and GTF2H3.

It localises to the nucleus. Its function is as follows. Component of the general transcription and DNA repair factor IIH (TFIIH) core complex, which is involved in general and transcription-coupled nucleotide excision repair (NER) of damaged DNA and, when complexed to CAK, in RNA transcription by RNA polymerase II. In NER, TFIIH acts by opening DNA around the lesion to allow the excision of the damaged oligonucleotide and its replacement by a new DNA fragment. In transcription, TFIIH has an essential role in transcription initiation. When the pre-initiation complex (PIC) has been established, TFIIH is required for promoter opening and promoter escape. Phosphorylation of the C-terminal tail (CTD) of the largest subunit of RNA polymerase II by the kinase module CAK controls the initiation of transcription. The N-terminus of GTF2H2 interacts with and regulates XPD whereas an intact C-terminus is required for a successful escape of RNAP II form the promoter. The sequence is that of General transcription factor IIH subunit 2 (Gtf2h2) from Rattus norvegicus (Rat).